The chain runs to 429 residues: Cytochrome P450 BJ-3 (429 aa).

Residue Cys376 participates in heme binding.

The protein belongs to the cytochrome P450 family. It depends on heme as a cofactor.

Its function is as follows. Cytochromes P450 are a group of heme-thiolate monooxygenases. They oxidize a variety of structurally unrelated compounds, including steroids, fatty acids, and xenobiotics. This is Cytochrome P450 BJ-3 (cyp114) from Bradyrhizobium diazoefficiens (strain JCM 10833 / BCRC 13528 / IAM 13628 / NBRC 14792 / USDA 110).